We begin with the raw amino-acid sequence, 382 residues long: Dual-specificity RNA methyltransferase RlmN (382 aa).

Glutamate 96 acts as the Proton acceptor in catalysis. In terms of domain architecture, Radical SAM core spans 102–342 (QGKRGTLCVS…VRTTRGEDID (241 aa)). Cysteine 109 and cysteine 345 are disulfide-bonded. Cysteine 116, cysteine 120, and cysteine 123 together coordinate [4Fe-4S] cluster. S-adenosyl-L-methionine contacts are provided by residues 170–171 (GE), serine 202, 224–226 (SLH), and asparagine 302. Cysteine 345 serves as the catalytic S-methylcysteine intermediate.

Belongs to the radical SAM superfamily. RlmN family. Requires [4Fe-4S] cluster as cofactor.

The protein resides in the cytoplasm. It carries out the reaction adenosine(2503) in 23S rRNA + 2 reduced [2Fe-2S]-[ferredoxin] + 2 S-adenosyl-L-methionine = 2-methyladenosine(2503) in 23S rRNA + 5'-deoxyadenosine + L-methionine + 2 oxidized [2Fe-2S]-[ferredoxin] + S-adenosyl-L-homocysteine. The catalysed reaction is adenosine(37) in tRNA + 2 reduced [2Fe-2S]-[ferredoxin] + 2 S-adenosyl-L-methionine = 2-methyladenosine(37) in tRNA + 5'-deoxyadenosine + L-methionine + 2 oxidized [2Fe-2S]-[ferredoxin] + S-adenosyl-L-homocysteine. Its function is as follows. Specifically methylates position 2 of adenine 2503 in 23S rRNA and position 2 of adenine 37 in tRNAs. m2A2503 modification seems to play a crucial role in the proofreading step occurring at the peptidyl transferase center and thus would serve to optimize ribosomal fidelity. This chain is Dual-specificity RNA methyltransferase RlmN, found in Pseudomonas fluorescens (strain ATCC BAA-477 / NRRL B-23932 / Pf-5).